The sequence spans 665 residues: Probable potassium transport system protein Kup (665 aa).

Low complexity predominate over residues 1 to 18 (MASEAPHASAPDCAPASS). Positions 1–31 (MASEAPHASAPDCAPASSDIPQQDGGSTNGH) are disordered. A run of 12 helical transmembrane segments spans residues 40–60 (FFALALGSVGVVFGDIGTSPL), 83–103 (VVSLALWALILIVTIKYVVFI), 131–151 (LVFVLGVAGAALFYGDAVITP), 171–191 (GVTNEVVLLIATVMLLGLFFI), 202–222 (LFGPVCAVWFGVMFSLGLMNL), 245–265 (GLTGFIVLGAVFLTVTGVEAL), 281–301 (WLFFVLPCLAMNYLGQGAFAL), 332–352 (LVLLAGAATVIASQAVITGAF), 380–400 (IFVPQLNTMLLLGVLAIMFTF), 409–429 (AYGLAVTGTMIVTTCMAFIVM), 435–455 (WSMPMALLFLVPFLALDITFL), and 462–482 (FFSGGWLPVLIGAALFTIMAT).

Belongs to the HAK/KUP transporter (TC 2.A.72) family.

It is found in the cell inner membrane. The enzyme catalyses K(+)(in) + H(+)(in) = K(+)(out) + H(+)(out). Its function is as follows. Transport of potassium into the cell. Likely operates as a K(+):H(+) symporter. The protein is Probable potassium transport system protein Kup of Caulobacter vibrioides (strain ATCC 19089 / CIP 103742 / CB 15) (Caulobacter crescentus).